A 558-amino-acid polypeptide reads, in one-letter code: MEFLGTTQTASYCGPKKVCGLQALPPAGQDPVVQECYQPFHLPGYRYLNAWRPSVFYKITTQQTCPEECSSSRRPPTILPSLRSALFCRYTQRDWDRSNDLQLRGAEASRLWAGRLTGDSLRIMQDKDQLIHQMQEGTSRNLNQRVCDIGFWKSELCYELDRLLTESNSMDTLKRRLECAAEEMNNPLQVALECLYNREKRIGIDLVHDNVEKNLIREVDLLKCCQDQMRKLAKRIDFQIRDNRDAQHALERDIEDKSSSQYIDESCFNLRNTSDSISFFHGMEKFDGTVSIPETWAKFSNDNIRHTQNMRANSIRLREEAEHLFETLSDQLWRQFTNTNLAFNARISEETDVKNKLQTQLAKILQEIFQAENTIMLLERAIVAKECPLKVAQTRLACRTRRPNVELCRDVSQFRLVNEVFTIDDTLQTLKLRLRETQDALQLLVMTKSRLEHELAIKANTLCIDKEKCMRMRKSFPSTPRLTGYTCSGIGSGPYTNQVPRVSSCGGGASCGGGLSCGGGVACGGGASCGGSAPCGGSALCSHPVSGSCPGSCFAPVC.

Residues 347–381 (ISEETDVKNKLQTQLAKILQEIFQAENTIMLLERA) are a coiled coil.

This sequence belongs to the tektin family. In terms of assembly, microtubule inner protein component of sperm flagellar doublet microtubules. Interacts with TEKT3. Ubiquitinated, leading to its degradation. Deubiquitinated by USP16, promoting its stability. As to expression, specifically expressed in testis.

The protein resides in the cytoplasm. The protein localises to the cytoskeleton. Its subcellular location is the flagellum axoneme. Its function is as follows. Sperm-specific microtubule inner protein (MIP) part of the dynein-decorated doublet microtubules (DMTs) in flagellar axoneme. Forms an extensive interaction network in different conformations that reinforces the helix bundle composed by other tektin proteins (TEKT1 to TEKT4) and MIPs to anchor the tektin bundle onto the tubulin wall of A-tubule of the sperm flagellum. The sequence is that of Tektin-5 from Rattus norvegicus (Rat).